Consider the following 428-residue polypeptide: Nucleoside diphosphate phosphatase ENTPD5 (428 aa).

A signal peptide spans 1 to 24 (MATSWGTVFFMLVVSCVCSAVSHR). The Proton acceptor role is filled by Glu172. Residue Asn232 is glycosylated (N-linked (GlcNAc...) asparagine). Disulfide bonds link Cys272–Cys303 and Cys363–Cys377. Asn368 carries N-linked (GlcNAc...) asparagine glycosylation.

The protein belongs to the GDA1/CD39 NTPase family. As to quaternary structure, monomer; active form. Homodimer; disulfide-linked. Homodimers are enzymatically inactive. It depends on Ca(2+) as a cofactor. Mg(2+) serves as cofactor. N-glycosylated; high-mannose type. Glycosylation is not essential for enzymatic activity. In terms of tissue distribution, expressed in adult liver, kidney, prostate, testis and colon. Much weaker expression in other tissues.

It localises to the endoplasmic reticulum. The protein localises to the secreted. It carries out the reaction a ribonucleoside 5'-diphosphate + H2O = a ribonucleoside 5'-phosphate + phosphate + H(+). It catalyses the reaction GDP + H2O = GMP + phosphate + H(+). The catalysed reaction is UDP + H2O = UMP + phosphate + H(+). The enzyme catalyses IDP + H2O = IMP + phosphate + H(+). It carries out the reaction CDP + H2O = CMP + phosphate + H(+). It catalyses the reaction ADP + H2O = AMP + phosphate + H(+). The protein operates within protein modification; protein glycosylation. Its function is as follows. Hydrolyzes nucleoside diphosphates with a preference for GDP, IDP and UDP compared to ADP and CDP. In the lumen of the endoplasmic reticulum, hydrolyzes UDP that acts as an end-product feedback inhibitor of the UDP-Glc:glycoprotein glucosyltransferases. UMP can be transported back by an UDP-sugar antiporter to the cytosol where it is consumed to regenerate UDP-glucose. Therefore, it positively regulates protein reglucosylation by clearing UDP from the ER lumen and by promoting the regeneration of UDP-glucose. Protein reglucosylation is essential to proper glycoprotein folding and quality control in the ER. The sequence is that of Nucleoside diphosphate phosphatase ENTPD5 from Homo sapiens (Human).